The sequence spans 175 residues: Protein tyrosine phosphatase PRL-1 (175 aa).

A Tyrosine-protein phosphatase domain is found at 15–172 (KPSRVLFHFL…YKRRHQGAGC (158 aa)). Cysteines 53 and 114 form a disulfide. D76 (proton donor) is an active-site residue. C114 serves as the catalytic Phosphocysteine intermediate. 116–120 (AGLGR) serves as a coordination point for substrate. Position 172 is a cysteine methyl ester (C172). C172 is lipidated: S-farnesyl cysteine. Positions 173 to 175 (VIM) are cleaved as a propeptide — removed in mature form.

This sequence belongs to the protein-tyrosine phosphatase family.

The protein localises to the cytoplasm. Its subcellular location is the mitochondrion matrix. It localises to the kinetoplast. It is found in the secreted. The protein resides in the extracellular exosome. The enzyme catalyses O-phospho-L-tyrosyl-[protein] + H2O = L-tyrosyl-[protein] + phosphate. With respect to regulation, activated in a reduced environment which promotes the reduction of the disulfide bond between the regulatory Cys-53 and catalytic Cys-114 residues. Functionally, has protein tyrosine phosphatase activity and may act as a virulence factor to support intracellular survival in host macrophages. This is Protein tyrosine phosphatase PRL-1 from Leishmania major.